Consider the following 575-residue polypeptide: Serine/threonine-protein phosphatase 2A regulatory subunit B'' subunit beta (575 aa).

A disordered region spans residues 41 to 131; the sequence is APGRDQPTPG…SQSIPTFYFP (91 aa). The region spanning 388 to 423 is the EF-hand domain; that stretch reads KTPTSIEYWFRCMDLDGDGALSMFELEYFYEEQCRR. The Ca(2+) site is built by Asp401, Asp403, Asp405, and Glu412.

In terms of assembly, PP2A consists of a common heterodimeric core enzyme, composed of a 36 kDa catalytic subunit (subunit C) and a 65 kDa constant regulatory subunit (PR65 or subunit A), that associates with a variety of regulatory subunits. Proteins that associate with the core dimer include three families of regulatory subunits B (the R2/B/PR55/B55, R3/B''/PR72/PR130/PR59 and R5/B'/B56 families), the 48 kDa variable regulatory subunit, viral proteins, and cell signaling molecules. Interacts with N-terminal region of CDC6. Interacts with NOD2.

The protein localises to the nucleus. In terms of biological role, the B regulatory subunit might modulate substrate selectivity and catalytic activity, and might also direct the localization of the catalytic enzyme to a particular subcellular compartment. The polypeptide is Serine/threonine-protein phosphatase 2A regulatory subunit B'' subunit beta (PPP2R3B) (Homo sapiens (Human)).